The chain runs to 67 residues: ATP synthase F(0) complex subunit 8 (67 aa).

Residues 8–24 (TWFITILSMLITLFILF) form a helical membrane-spanning segment. At lysine 54 the chain carries N6-acetyllysine; alternate. An N6-succinyllysine; alternate modification is found at lysine 54. The residue at position 57 (lysine 57) is an N6-acetyllysine.

Belongs to the ATPase protein 8 family. In terms of assembly, component of the ATP synthase complex composed at least of ATP5F1A/subunit alpha, ATP5F1B/subunit beta, ATP5MC1/subunit c (homooctomer), MT-ATP6/subunit a, MT-ATP8/subunit 8, ATP5ME/subunit e, ATP5MF/subunit f, ATP5MG/subunit g, ATP5MK/subunit k, ATP5MJ/subunit j, ATP5F1C/subunit gamma, ATP5F1D/subunit delta, ATP5F1E/subunit epsilon, ATP5PF/subunit F6, ATP5PB/subunit b, ATP5PD/subunit d, ATP5PO/subunit OSCP. ATP synthase complex consists of a soluble F(1) head domain (subunits alpha(3) and beta(3)) - the catalytic core - and a membrane F(0) domain - the membrane proton channel (subunits c, a, 8, e, f, g, k and j). These two domains are linked by a central stalk (subunits gamma, delta, and epsilon) rotating inside the F1 region and a stationary peripheral stalk (subunits F6, b, d, and OSCP). Interacts with PRICKLE3.

The protein localises to the mitochondrion membrane. Functionally, subunit 8, of the mitochondrial membrane ATP synthase complex (F(1)F(0) ATP synthase or Complex V) that produces ATP from ADP in the presence of a proton gradient across the membrane which is generated by electron transport complexes of the respiratory chain. ATP synthase complex consist of a soluble F(1) head domain - the catalytic core - and a membrane F(1) domain - the membrane proton channel. These two domains are linked by a central stalk rotating inside the F(1) region and a stationary peripheral stalk. During catalysis, ATP synthesis in the catalytic domain of F(1) is coupled via a rotary mechanism of the central stalk subunits to proton translocation. In vivo, can only synthesize ATP although its ATP hydrolase activity can be activated artificially in vitro. Part of the complex F(0) domain. In Dugong dugon (Dugong), this protein is ATP synthase F(0) complex subunit 8.